Reading from the N-terminus, the 457-residue chain is tRNA modification GTPase MnmE (457 aa).

(6S)-5-formyl-5,6,7,8-tetrahydrofolate is bound by residues R25, E87, and R126. One can recognise a TrmE-type G domain in the interval 223–377; sequence GISTAIIGRP…IEERINNLFF (155 aa). Position 233 (N233) interacts with K(+). Residues 233–238, 252–258, and 277–280 each bind GTP; these read NVGKSS, TDIAGTT, and DTAG. A Mg(2+)-binding site is contributed by S237. K(+) is bound by residues T252, I254, and T257. Residue T258 participates in Mg(2+) binding. K457 provides a ligand contact to (6S)-5-formyl-5,6,7,8-tetrahydrofolate.

The protein belongs to the TRAFAC class TrmE-Era-EngA-EngB-Septin-like GTPase superfamily. TrmE GTPase family. Homodimer. Heterotetramer of two MnmE and two MnmG subunits. K(+) is required as a cofactor.

The protein resides in the cytoplasm. Functionally, exhibits a very high intrinsic GTPase hydrolysis rate. Involved in the addition of a carboxymethylaminomethyl (cmnm) group at the wobble position (U34) of certain tRNAs, forming tRNA-cmnm(5)s(2)U34. This is tRNA modification GTPase MnmE from Streptococcus pneumoniae (strain Hungary19A-6).